The following is a 269-amino-acid chain: 1-(5-phosphoribosyl)-5-[(5-phosphoribosylamino)methylideneamino] imidazole-4-carboxamide isomerase (269 aa).

Catalysis depends on D10, which acts as the Proton acceptor. D132 (proton donor) is an active-site residue.

This sequence belongs to the HisA/HisF family.

It is found in the cytoplasm. The catalysed reaction is 1-(5-phospho-beta-D-ribosyl)-5-[(5-phospho-beta-D-ribosylamino)methylideneamino]imidazole-4-carboxamide = 5-[(5-phospho-1-deoxy-D-ribulos-1-ylimino)methylamino]-1-(5-phospho-beta-D-ribosyl)imidazole-4-carboxamide. It participates in amino-acid biosynthesis; L-histidine biosynthesis; L-histidine from 5-phospho-alpha-D-ribose 1-diphosphate: step 4/9. The sequence is that of 1-(5-phosphoribosyl)-5-[(5-phosphoribosylamino)methylideneamino] imidazole-4-carboxamide isomerase from Xylella fastidiosa (strain M12).